Here is a 360-residue protein sequence, read N- to C-terminus: G-protein coupled receptor 15 (360 aa).

Residues 1-33 (MDPEETSVYLDYYYATSPNSDIRETHSHVPYTS) are Extracellular-facing. A helical transmembrane segment spans residues 34 to 54 (VFLPVFYTAVFLTGVLGNLVL). At 55 to 69 (MGALHFKPGSRRLID) the chain is on the cytoplasmic side. The chain crosses the membrane as a helical span at residues 70 to 90 (IFIINLAASDFIFLVTLPLWV). The Extracellular segment spans residues 91–120 (DKEASLGLWRTGSFLCKGSSYMISVNMHCS). The chain crosses the membrane as a helical span at residues 121 to 141 (VLLLTCMSVDRYLAIVWPVVS). The Cytoplasmic segment spans residues 142 to 149 (RKFRRTDC). Residues 150–170 (AYVVCASIWFISCLLGLPTLL) form a helical membrane-spanning segment. Residues 171–192 (SRELTLIDDKPYCAEKKATPIK) are Extracellular-facing. Residues 193-213 (LIWSLVALIFTFFVPLLSIVT) traverse the membrane as a helical segment. Over 214–239 (CYCCIARKLCAHYQQSGKHNKKLKKS) the chain is Cytoplasmic. Residues 240-260 (IKIIFIVVAAFLVSWLPFNTF) traverse the membrane as a helical segment. Residues 261-284 (KFLAIVSGLRQEHYLPSAILQLGM) lie on the Extracellular side of the membrane. A helical membrane pass occupies residues 285–305 (EVSGPLAFANSCVNPFIYYIF). Topologically, residues 306-360 (DSYIRRAIVHCLCPCLKNYDFGSSTETSDSHLTKALSTFIHAEDFARRRKRSVSL) are cytoplasmic. Serine 359 bears the Phosphoserine mark.

Belongs to the G-protein coupled receptor 1 family. As to quaternary structure, interacts with adapter YWHAE; this interaction promotes ER-to-Golgi transport of GPR15. Interacts with GNAI1; this interaction initiates the signaling pathway. Post-translationally, phosphorylation is necessary for YWHAE binding and efficient surface expression. In terms of processing, O-glycosylated. Sialylated O-glycans in the N-terminal tail inhibits binding of GPR15LG. Sulfation is required for efficient binding of GPR15LG. In terms of tissue distribution, highly expressed in lymphoid tissues, including macrophages and peripheral blood mononuclear cells.

It localises to the cell membrane. Functionally, g protein-coupled receptor that plays an important role in immune homeostasis. Acts via its natural ligand GPR15LG, a chemokine-like polypeptide strongly expressed in gastrointestinal tissues. GPR15-GPR15LG signaling axis regulates intestinal homeostasis and inflammation through the migration of immune cells. Controls thereby the specific homing of T-cells, particularly FOXP3+ regulatory T-cells (Tregs), to the large intestine lamina propria. Also required for skin localization of thymus-derived dendritic epidermal T-cells. Plays an important role in mediating cytoprotective function as well as angiogenesis of thrombomodulin. Mechanistically, preferentially signals through the Gi/o pathway to inhibit adenylate cyclase activity and activate a phosphatidylinositol-calcium second messenger system that regulates the release of Ca(2+) ions from intracellular stores. In terms of biological role, (Microbial infection) Acts as an alternative coreceptor with CD4 for HIV-1 infection. The chain is G-protein coupled receptor 15 (GPR15) from Homo sapiens (Human).